We begin with the raw amino-acid sequence, 572 residues long: 2-succinyl-5-enolpyruvyl-6-hydroxy-3-cyclohexene-1-carboxylate synthase (572 aa).

Belongs to the TPP enzyme family. MenD subfamily. In terms of assembly, homodimer. The cofactor is Mg(2+). It depends on Mn(2+) as a cofactor. Requires thiamine diphosphate as cofactor.

It catalyses the reaction isochorismate + 2-oxoglutarate + H(+) = 5-enolpyruvoyl-6-hydroxy-2-succinyl-cyclohex-3-ene-1-carboxylate + CO2. Its pathway is quinol/quinone metabolism; 1,4-dihydroxy-2-naphthoate biosynthesis; 1,4-dihydroxy-2-naphthoate from chorismate: step 2/7. It participates in quinol/quinone metabolism; menaquinone biosynthesis. Its function is as follows. Catalyzes the thiamine diphosphate-dependent decarboxylation of 2-oxoglutarate and the subsequent addition of the resulting succinic semialdehyde-thiamine pyrophosphate anion to isochorismate to yield 2-succinyl-5-enolpyruvyl-6-hydroxy-3-cyclohexene-1-carboxylate (SEPHCHC). The protein is 2-succinyl-5-enolpyruvyl-6-hydroxy-3-cyclohexene-1-carboxylate synthase of Aeromonas salmonicida (strain A449).